Reading from the N-terminus, the 478-residue chain is Ribosomal RNA small subunit methyltransferase F (478 aa).

S-adenosyl-L-methionine is bound by residues 123 to 129 (AAAPGSK), Glu-147, Asp-174, and Asp-192. Catalysis depends on Cys-245, which acts as the Nucleophile.

It belongs to the class I-like SAM-binding methyltransferase superfamily. RsmB/NOP family.

Its subcellular location is the cytoplasm. It carries out the reaction cytidine(1407) in 16S rRNA + S-adenosyl-L-methionine = 5-methylcytidine(1407) in 16S rRNA + S-adenosyl-L-homocysteine + H(+). Its function is as follows. Specifically methylates the cytosine at position 1407 (m5C1407) of 16S rRNA. The protein is Ribosomal RNA small subunit methyltransferase F of Vibrio campbellii (strain ATCC BAA-1116).